A 372-amino-acid polypeptide reads, in one-letter code: Cytochrome b (372 aa).

A run of 4 helical transmembrane segments spans residues 25 to 45 (FGSM…FLAI), 69 to 90 (WIMQ…YIHI), 105 to 125 (WLSG…GYVL), and 170 to 190 (FFAL…IHII). Heme b contacts are provided by His-75 and His-89. Positions 174 and 188 each coordinate heme b. Residue His-193 participates in a ubiquinone binding. 4 consecutive transmembrane segments (helical) span residues 218–238 (YKDM…LSFS), 280–300 (LGGT…PFTH), 312–332 (LSQA…WTAS), and 339–358 (FVTI…ITIP).

The protein belongs to the cytochrome b family. In terms of assembly, the cytochrome bc1 complex contains 3 respiratory subunits (MT-CYB, CYC1 and UQCRFS1), 2 core proteins (UQCRC1 and UQCRC2) and probably 6 low-molecular weight proteins. The cofactor is heme b.

The protein localises to the mitochondrion inner membrane. Its function is as follows. Component of the ubiquinol-cytochrome c reductase complex (complex III or cytochrome b-c1 complex) that is part of the mitochondrial respiratory chain. The b-c1 complex mediates electron transfer from ubiquinol to cytochrome c. Contributes to the generation of a proton gradient across the mitochondrial membrane that is then used for ATP synthesis. The sequence is that of Cytochrome b (MT-CYB) from Naja multifasciata (Burrowing cobra).